A 55-amino-acid chain; its full sequence is Hydrophobic protein LTI6B (55 aa).

Transmembrane regions (helical) follow at residues Ile8–Gly28 and Phe31–Tyr51.

It belongs to the UPF0057 (PMP3) family.

The protein localises to the membrane. Functionally, plays a role in the regulation of membrane potential. Could mediate a proton leak. This chain is Hydrophobic protein LTI6B (LTI6B), found in Oryza sativa subsp. indica (Rice).